Consider the following 121-residue polypeptide: Large ribosomal subunit protein uL18 (121 aa).

The protein belongs to the universal ribosomal protein uL18 family. Part of the 50S ribosomal subunit; part of the 5S rRNA/L5/L18/L25 subcomplex. Contacts the 5S and 23S rRNAs.

In terms of biological role, this is one of the proteins that bind and probably mediate the attachment of the 5S RNA into the large ribosomal subunit, where it forms part of the central protuberance. The polypeptide is Large ribosomal subunit protein uL18 (Pelobacter propionicus (strain DSM 2379 / NBRC 103807 / OttBd1)).